The following is a 657-amino-acid chain: Broad substrate specificity ATP-binding cassette transporter ABCG2 (657 aa).

A disordered region spans residues 1–25 (MSSSNDHVLVPMSQRNKNGLPGMSS). Residues 1–395 (MSSSNDHVLV…KNLLGNPQAS (395 aa)) are Cytoplasmic-facing. Residues 48–285 (VKSGFLVRKT…FASAGYHCEP (238 aa)) enclose the ABC transporter domain. Residues 79–86 (GPTGGGKS), 183–189 (RGISGGE), E210, and H242 each bind ATP. The ABC transmembrane type-2 domain maps to 389–653 (LGNPQASVAQ…TIAYLKLLFL (265 aa)). A helical transmembrane segment spans residues 396–416 (VAQLIVTVILGLIIGALYFGL). Over 417-428 (KNDPTGMQNRAG) the chain is Extracellular. The helical transmembrane segment at 429 to 449 (VFFFLTTNQCFTSVSAVELFV) threads the bilayer. Residues 450 to 477 (VEKKLFIHEYISGYYRVSSYFFGKLVSD) are Cytoplasmic-facing. A helical membrane pass occupies residues 478-498 (LLPMRFLPSVIYTCILYFMLG). Over 499–506 (LKRTVEAF) the chain is Extracellular. The chain crosses the membrane as a helical span at residues 507–527 (FIMMFTLIMVAYTASSMALAI). At 528–535 (AAGQSVVS) the chain is on the cytoplasmic side. The chain crosses the membrane as a helical span at residues 536–556 (VATLLMTISFVFMMLFSGLLV). Over 557–632 (NLRTIGPWLS…LSPWGLWRNH (76 aa)) the chain is Extracellular. C592 and C610 form a disulfide bridge. N596 and N600 each carry an N-linked (GlcNAc...) asparagine glycan. The helical transmembrane segment at 633–653 (VALACMIIIFLTIAYLKLLFL) threads the bilayer. Residues 654 to 657 (KKYS) are Cytoplasmic-facing.

The protein belongs to the ABC transporter superfamily. ABCG family. Eye pigment precursor importer (TC 3.A.1.204) subfamily. In terms of assembly, homodimer; disulfide-linked. The minimal functional unit is a homodimer, but the major oligomeric form in plasma membrane is a homotetramer with possibility of higher order oligomerization up to homododecamers. Post-translationally, N-glycosylated in brain capillary, kidney and small intestine but not in heart. N-glycosylated. Glycosylation-deficient ABCG2 is normally expressed and functional. In terms of processing, phosphorylated. Phosphorylation may regulate the localization to the plasma membrane, the homooligomerization and therefore, the activity of the transporter. As to expression, highly expressed in brain capillary, kidney and small intestine. Lower expression in heart. Preferentially expressed (at protein level) on the luminal membrane of brain capillaries, in kidney and small intestine.

It is found in the cell membrane. It localises to the apical cell membrane. The protein localises to the mitochondrion membrane. The enzyme catalyses ATP + H2O + xenobioticSide 1 = ADP + phosphate + xenobioticSide 2.. It catalyses the reaction urate(in) + ATP + H2O = urate(out) + ADP + phosphate + H(+). The catalysed reaction is indoxyl sulfate(in) + ATP + H2O = indoxyl sulfate(out) + ADP + phosphate + H(+). It carries out the reaction sphing-4-enine 1-phosphate(in) + ATP + H2O = sphing-4-enine 1-phosphate(out) + ADP + phosphate + H(+). The enzyme catalyses estrone 3-sulfate(in) + ATP + H2O = estrone 3-sulfate(out) + ADP + phosphate + H(+). It catalyses the reaction dehydroepiandrosterone 3-sulfate(in) + ATP + H2O = dehydroepiandrosterone 3-sulfate(out) + ADP + phosphate + H(+). The catalysed reaction is 4-methylumbelliferone sulfate(in) + ATP + H2O = 4-methylumbelliferone sulfate(out) + ADP + phosphate + H(+). It carries out the reaction 5,7-dimethyl-2-methylamino-4-(3-pyridylmethyl)-1,3-benzothiazol-6-yl beta-D-glucuronate(in) + ATP + H2O = 5,7-dimethyl-2-methylamino-4-(3-pyridylmethyl)-1,3-benzothiazol-6-yl beta-D-glucuronate(out) + ADP + phosphate + H(+). The enzyme catalyses 4-methylumbelliferone beta-D-glucuronate(in) + ATP + H2O = 4-methylumbelliferone beta-D-glucuronate(out) + ADP + phosphate + H(+). It catalyses the reaction 5,7-dimethyl-2-methylamino-4-(3-pyridylmethyl)-1,3-benzothiazol-6-yl sulfate(in) + ATP + H2O = 5,7-dimethyl-2-methylamino-4-(3-pyridylmethyl)-1,3-benzothiazol-6-yl sulfate(out) + ADP + phosphate + H(+). The catalysed reaction is 17beta-estradiol 17-O-(beta-D-glucuronate)(in) + ATP + H2O = 17beta-estradiol 17-O-(beta-D-glucuronate)(out) + ADP + phosphate + H(+). It carries out the reaction methotrexate(in) + ATP + H2O = methotrexate(out) + ADP + phosphate + H(+). The enzyme catalyses riboflavin(in) + ATP + H2O = riboflavin(out) + ADP + phosphate + H(+). It catalyses the reaction pheophorbide a(in) + ATP + H2O = pheophorbide a(out) + ADP + phosphate + H(+). The catalysed reaction is itaconate(in) + ATP + H2O = itaconate(out) + ADP + phosphate + H(+). Broad substrate specificity ATP-dependent transporter of the ATP-binding cassette (ABC) family that actively extrudes a wide variety of physiological compounds, dietary toxins and xenobiotics from cells. Involved in porphyrin homeostasis, mediating the export of protoporphyrin IX (PPIX) from both mitochondria to cytosol and cytosol to extracellular space, it also functions in the cellular export of heme. Also mediates the efflux of sphingosine-1-P from cells. Acts as a urate exporter functioning in both renal and extrarenal urate excretion. In kidney, it also functions as a physiological exporter of the uremic toxin indoxyl sulfate. Also involved in the excretion of steroids like estrone 3-sulfate/E1S, 3beta-sulfooxy-androst-5-en-17-one/DHEAS, and other sulfate conjugates. Mediates the secretion of the riboflavin and biotin vitamins into milk. Extrudes pheophorbide a, a phototoxic porphyrin catabolite of chlorophyll, reducing its bioavailability. Plays an important role in the exclusion of xenobiotics from the brain. It confers to cells a resistance to multiple drugs and other xenobiotics including mitoxantrone, pheophorbide, camptothecin, methotrexate, azidothymidine, and the anthracyclines daunorubicin and doxorubicin, through the control of their efflux. In placenta, it limits the penetration of drugs from the maternal plasma into the fetus. May play a role in early stem cell self-renewal by blocking differentiation. In inflammatory macrophages, exports itaconate from the cytosol to the extracellular compartment and limits the activation of TFEB-dependent lysosome biogenesis involved in antibacterial innate immune response. In Rattus norvegicus (Rat), this protein is Broad substrate specificity ATP-binding cassette transporter ABCG2 (Abcg2).